The chain runs to 510 residues: Histidine ammonia-lyase (510 aa).

A cross-link (5-imidazolinone (Ala-Gly)) is located at residues A143 to G145. S144 carries the post-translational modification 2,3-didehydroalanine (Ser).

This sequence belongs to the PAL/histidase family. Contains an active site 4-methylidene-imidazol-5-one (MIO), which is formed autocatalytically by cyclization and dehydration of residues Ala-Ser-Gly.

It localises to the cytoplasm. It catalyses the reaction L-histidine = trans-urocanate + NH4(+). It functions in the pathway amino-acid degradation; L-histidine degradation into L-glutamate; N-formimidoyl-L-glutamate from L-histidine: step 1/3. The chain is Histidine ammonia-lyase from Shewanella sediminis (strain HAW-EB3).